We begin with the raw amino-acid sequence, 193 residues long: Probable GTP-binding protein EngB (193 aa).

An EngB-type G domain is found at 24–193 (NIPEIALAGR…ELKAALAELL (170 aa)). Residues 32–39 (GRSNVGKS), 59–63 (GKTRT), 77–80 (DLPG), 144–147 (TKAD), and 174–176 (FSA) contribute to the GTP site. Positions 39 and 61 each coordinate Mg(2+).

The protein belongs to the TRAFAC class TrmE-Era-EngA-EngB-Septin-like GTPase superfamily. EngB GTPase family. Requires Mg(2+) as cofactor.

In terms of biological role, necessary for normal cell division and for the maintenance of normal septation. The sequence is that of Probable GTP-binding protein EngB from Syntrophomonas wolfei subsp. wolfei (strain DSM 2245B / Goettingen).